The primary structure comprises 238 residues: MRLRTSLGVASACASVASAALKVTEDNSTITLANDRLTSTFAKDKGRVSELFLDGQDLLGPISGNTGVGPYLDCYCIPSGFYTAGSTDPRLEVVQGTDSTGTKYAGVILNDTYTPTGQQFQQYWFLRDGETGLHTFSRLAYYNETTPFLRNLQEFRTLFRPNTELWTHLTSSEAQTAPLPSKEAIANEVVVQDATWRFNNTPNDAYYTQFSEYFTKYTFSNCMGLFKTYWYAASANLQ.

A signal peptide spans 1-19; the sequence is MRLRTSLGVASACASVASA. N-linked (GlcNAc...) asparagine glycosylation is found at N27, N110, and N143.

This sequence belongs to the polysaccharide lyase 4 family.

It localises to the secreted. It catalyses the reaction Endotype eliminative cleavage of L-alpha-rhamnopyranosyl-(1-&gt;4)-alpha-D-galactopyranosyluronic acid bonds of rhamnogalacturonan I domains in ramified hairy regions of pectin leaving L-rhamnopyranose at the reducing end and 4-deoxy-4,5-unsaturated D-galactopyranosyluronic acid at the non-reducing end.. Its function is as follows. Pectinolytic enzymes consist of four classes of enzymes: pectin lyase, polygalacturonase, pectin methylesterase and rhamnogalacturonase. Degrades the rhamnogalacturonan I (RG-I) backbone of pectin. The polypeptide is Probable rhamnogalacturonate lyase B (rglB) (Aspergillus oryzae (strain ATCC 42149 / RIB 40) (Yellow koji mold)).